A 122-amino-acid chain; its full sequence is Vacuolar transporter chaperone complex subunit 1 (122 aa).

At 1 to 32 the chain is on the cytoplasmic side; that stretch reads MSTQPLLQTTPGKRIALPVRVEPKVFFANERT. The helical transmembrane segment at 33-53 threads the bilayer; the sequence is FLSWLSFAVVLGGLSVGLLNF. Residues 54–59 are Vacuolar-facing; sequence GDRIGK. Residues 60-80 traverse the membrane as a helical segment; it reads ISAGLFTIVAIGTMGYALGIY. Topologically, residues 81-101 are cytoplasmic; sequence HWRASAIRRRGSGPYDDRLGP. Residues 102–122 form a helical membrane-spanning segment; it reads TILCFVLLAAIITNFVLRMLF.

This sequence belongs to the VTC1 family. In terms of assembly, the VTC core complex is an integral membrane heterooligomer composed of at least the catalytic subunit vtc4 and the accessory subunits vtc1 and vtc2. vtc1 is a small membrane protein without hydrophilic domain. Vtc2 and vtc4 are related and have 2 hydrophilic domains that face the cytosol, an N-terminal SPX domain and the central core domain. The central core in vtc4 is the catalytic domain. Vtc1 interacts with GTP-bound Ras-like cdc42, which is subsequently inactivated.

Its subcellular location is the vacuole membrane. Its function is as follows. Accessory subunit of the vacuolar transporter chaperone (VTC) complex. The VTC complex acts as a vacuolar polyphosphate polymerase that catalyzes the synthesis of inorganic polyphosphate (polyP) via transfer of phosphate from ATP to a growing polyP chain, releasing ADP. VTC exposes its catalytic domain vtc4 to the cytosol, where the growing polyP chain winds through a tunnel-shaped pocket, integrating cytoplasmic polymer synthesis with polyP membrane translocation. The VTC complex carries 9 vacuolar transmembrane domains, which are likely to constitute the translocation channel into the organelle lumen. PolyP synthesis is tightly coupled to its transport into the vacuole lumen, in order to avoid otherwise toxic intermediates in the cytosol, and it depends on the proton gradient across the membrane, formed by V-ATPase. Vtc1 contributes only 3 transmembrane domains to the complex. The VTC complex also plays a role in vacuolar membrane fusion. Involved in the control of cell polarity. The protein is Vacuolar transporter chaperone complex subunit 1 of Schizosaccharomyces pombe (strain 972 / ATCC 24843) (Fission yeast).